Consider the following 373-residue polypeptide: tRNA-specific 2-thiouridylase MnmA (373 aa).

ATP contacts are provided by residues 12-19 (GMSGGVDS) and Met-38. Residues 98 to 100 (NPD) are interaction with target base in tRNA. Residue Cys-103 is the Nucleophile of the active site. Cys-103 and Cys-200 form a disulfide bridge. Position 127 (Gly-127) interacts with ATP. The segment at 150–152 (KDQ) is interaction with tRNA. The active-site Cysteine persulfide intermediate is Cys-200. An interaction with tRNA region spans residues 312–313 (RY).

This sequence belongs to the MnmA/TRMU family.

It is found in the cytoplasm. It carries out the reaction S-sulfanyl-L-cysteinyl-[protein] + uridine(34) in tRNA + AH2 + ATP = 2-thiouridine(34) in tRNA + L-cysteinyl-[protein] + A + AMP + diphosphate + H(+). In terms of biological role, catalyzes the 2-thiolation of uridine at the wobble position (U34) of tRNA, leading to the formation of s(2)U34. This chain is tRNA-specific 2-thiouridylase MnmA, found in Streptococcus pneumoniae (strain Hungary19A-6).